The following is a 515-amino-acid chain: Maturase K (515 aa).

The protein belongs to the intron maturase 2 family. MatK subfamily.

It localises to the plastid. The protein localises to the chloroplast. In terms of biological role, usually encoded in the trnK tRNA gene intron. Probably assists in splicing its own and other chloroplast group II introns. This is Maturase K from Picea mariana (Black spruce).